A 360-amino-acid chain; its full sequence is Phospho-N-acetylmuramoyl-pentapeptide-transferase (360 aa).

Helical transmembrane passes span 21 to 41 (YVTFRAILGLLTAMVFSLWWG), 74 to 94 (MGGLLILAGVFISVLLWGDLG), 97 to 117 (YVWVMLFVLGAFGLIGFIDDY), 134 to 154 (YILQSLAALAIAFYLYASAGS), 168 to 188 (VMPQLGAFFILLAYFTIVGSS), 199 to 219 (GLAIMPTVMVAAAFALIAYLS), 236 to 256 (SGELVIVCTAIVGAGLGFLWF), 263 to 283 (VFMGDVGSLSLGAALGTIAVL), 288 to 308 (ILLVIMGGVFVMETVSVILQV), and 338 to 358 (VIVRFWIISLFLVLLGLATLK).

The protein belongs to the glycosyltransferase 4 family. MraY subfamily. The cofactor is Mg(2+).

It localises to the cell inner membrane. The enzyme catalyses UDP-N-acetyl-alpha-D-muramoyl-L-alanyl-gamma-D-glutamyl-meso-2,6-diaminopimeloyl-D-alanyl-D-alanine + di-trans,octa-cis-undecaprenyl phosphate = di-trans,octa-cis-undecaprenyl diphospho-N-acetyl-alpha-D-muramoyl-L-alanyl-D-glutamyl-meso-2,6-diaminopimeloyl-D-alanyl-D-alanine + UMP. It participates in cell wall biogenesis; peptidoglycan biosynthesis. Functionally, catalyzes the initial step of the lipid cycle reactions in the biosynthesis of the cell wall peptidoglycan: transfers peptidoglycan precursor phospho-MurNAc-pentapeptide from UDP-MurNAc-pentapeptide onto the lipid carrier undecaprenyl phosphate, yielding undecaprenyl-pyrophosphoryl-MurNAc-pentapeptide, known as lipid I. The sequence is that of Phospho-N-acetylmuramoyl-pentapeptide-transferase from Shewanella loihica (strain ATCC BAA-1088 / PV-4).